Reading from the N-terminus, the 104-residue chain is Large ribosomal subunit protein uL23 (104 aa).

The protein belongs to the universal ribosomal protein uL23 family. Part of the 50S ribosomal subunit. Contacts protein L29, and trigger factor when it is bound to the ribosome.

One of the early assembly proteins it binds 23S rRNA. One of the proteins that surrounds the polypeptide exit tunnel on the outside of the ribosome. Forms the main docking site for trigger factor binding to the ribosome. The polypeptide is Large ribosomal subunit protein uL23 (Cupriavidus metallidurans (strain ATCC 43123 / DSM 2839 / NBRC 102507 / CH34) (Ralstonia metallidurans)).